Consider the following 111-residue polypeptide: Ig kappa chain V-III region PC 7940 (111 aa).

Positions 1–23 (DIVLTQSPASLAVSLGQRATISC) are framework-1. C23 and C92 are oxidised to a cystine. A complementarity-determining-1 region spans residues 24-38 (RASKSVSAFGYSYMH). The segment at 39-53 (WYQQKPGQPPKLLIY) is framework-2. The complementarity-determining-2 stretch occupies residues 54 to 60 (LASNLES). The tract at residues 61 to 92 (GVPARFSGSGSGTDFTLNIHPVEEEDAVTYYC) is framework-3. The complementarity-determining-3 stretch occupies residues 93–101 (QHSRELPPT). A framework-4 region spans residues 102–111 (FGGGTKLEIK).

The protein is Ig kappa chain V-III region PC 7940 of Mus musculus (Mouse).